Reading from the N-terminus, the 211-residue chain is Arginine exporter protein ArgO (211 aa).

6 helical membrane passes run 1–21 (MISYYFQGFALGAAMILPLGP), 37–57 (LMIALLCALSDLVLISAGIFG), 68–88 (LLALVTWGGVAFLLWYGFGAL), 111–131 (IIATMLAVTWLNPHVYLDTFV), 147–167 (WFALGTISASFLWFFGLALLA), and 179–199 (AQRIINILVGVVMWLIAFQLA).

Belongs to the LysE/ArgO transporter (TC 2.A.75) family.

It is found in the cell inner membrane. The enzyme catalyses L-arginine(in) = L-arginine(out). Involved in the export of arginine. Important to control the intracellular level of arginine and the correct balance between arginine and lysine. The polypeptide is Arginine exporter protein ArgO (Salmonella typhimurium (strain LT2 / SGSC1412 / ATCC 700720)).